An 877-amino-acid polypeptide reads, in one-letter code: Alanine--tRNA ligase (877 aa).

Zn(2+)-binding residues include H567, H571, C669, and H673.

This sequence belongs to the class-II aminoacyl-tRNA synthetase family. Requires Zn(2+) as cofactor.

It is found in the cytoplasm. It catalyses the reaction tRNA(Ala) + L-alanine + ATP = L-alanyl-tRNA(Ala) + AMP + diphosphate. In terms of biological role, catalyzes the attachment of alanine to tRNA(Ala) in a two-step reaction: alanine is first activated by ATP to form Ala-AMP and then transferred to the acceptor end of tRNA(Ala). Also edits incorrectly charged Ser-tRNA(Ala) and Gly-tRNA(Ala) via its editing domain. This chain is Alanine--tRNA ligase, found in Rickettsia bellii (strain RML369-C).